The primary structure comprises 736 residues: Krev interaction trapped protein 1 (736 aa).

An N-terminal domain similar to Nudix hydrolase domain region spans residues 1 to 170; that stretch reads MGNPENIEDA…DKWLDERHAQ (170 aa). The segment at 172–195 is interaction with ITGB1BP1; the sequence is HFIPALFRPSPLERIKTNVINPAY. ANK repeat units lie at residues 287–316, 320–350, 354–383, and 388–419; these read VDDF…SVNQ, DHWA…NPNL, QLSS…TDRH, and QGRS…NKPY. In terms of domain architecture, FERM spans 420 to 734; sequence EKVRIYRMDG…LNGQLMPTER (315 aa). The tract at residues 430-452 is interaction with RAP1B; sequence SYRSVELKHGNNTTVQQIMEGMR.

Interacts with CDH5. Found in a complex, at least composed of ITGB1BP1, KRIT1 and RAP1A. Interacts (via C-terminus FERM domain) with RAP1A (active GTP-bound form preferentially); the interaction does not induce the opening conformation of KRIT1. Interacts (via FERM domain) with RAP1B. Interacts (via N-terminus NPXY motif) with ITGB1BP1; the interaction induces the opening conformation of KRIT1 and competes with ITGB1 for ITGB1BP1 interaction. Interacts with HEG1 and CCM2; greatly facilitates CCM2-binding to HEG1. Associates (via N-terminus and C-terminus regions) with microtubules; the interaction is inhibited in presence of ITGB1BP1 and active GTP-bound RAP1A. In terms of tissue distribution, low levels in brain. Very weak expression found in heart and muscle.

Its subcellular location is the cytoplasm. The protein resides in the cytoskeleton. It is found in the cell membrane. The protein localises to the cell junction. Its function is as follows. Component of the CCM signaling pathway which is a crucial regulator of heart and vessel formation and integrity. Negative regulator of angiogenesis. Inhibits endothelial proliferation, apoptosis, migration, lumen formation and sprouting angiogenesis in primary endothelial cells. Promotes AKT phosphorylation in a NOTCH-dependent and independent manner, and inhibits ERK1/2 phosphorylation indirectly through activation of the DELTA-NOTCH cascade. Acts in concert with CDH5 to establish and maintain correct endothelial cell polarity and vascular lumen and these effects are mediated by recruitment and activation of the Par polarity complex and RAP1B. Required for the localization of phosphorylated PRKCZ, PARD3, TIAM1 and RAP1B to the cell junction, and cell junction stabilization. Plays a role in integrin signaling via its interaction with ITGB1BP1; this prevents the interaction between ITGB1 and ITGB1BP1. Microtubule-associated protein that binds to phosphatidylinositol 4,5-bisphosphate (PIP2)-containing membranes in a GTP-bound RAP1-dependent manner. Plays an important role in the maintenance of the intracellular reactive oxygen species (ROS) homeostasis to prevent oxidative cellular damage. Regulates the homeostasis of intracellular ROS through an antioxidant pathway involving FOXO1 and SOD2. Facilitates the down-regulation of cyclin-D1 (CCND1) levels required for cell transition from proliferative growth to quiescence by preventing the accumulation of intracellular ROS through the modulation of FOXO1 and SOD2 levels. May play a role in the regulation of macroautophagy through the down-regulation of the mTOR pathway. The protein is Krev interaction trapped protein 1 (KRIT1) of Homo sapiens (Human).